An 89-amino-acid chain; its full sequence is DNA-directed RNA polymerase subunit Rpo6 (89 aa).

The protein belongs to the archaeal Rpo6/eukaryotic RPB6 RNA polymerase subunit family. Part of the RNA polymerase complex.

It is found in the cytoplasm. The catalysed reaction is RNA(n) + a ribonucleoside 5'-triphosphate = RNA(n+1) + diphosphate. Its function is as follows. DNA-dependent RNA polymerase (RNAP) catalyzes the transcription of DNA into RNA using the four ribonucleoside triphosphates as substrates. In Aeropyrum pernix (strain ATCC 700893 / DSM 11879 / JCM 9820 / NBRC 100138 / K1), this protein is DNA-directed RNA polymerase subunit Rpo6.